The sequence spans 199 residues: Ribosomal RNA large subunit methyltransferase E (199 aa).

Gly53, Trp55, Asp73, Asp92, and Asp114 together coordinate S-adenosyl-L-methionine. The Proton acceptor role is filled by Lys154.

The protein belongs to the class I-like SAM-binding methyltransferase superfamily. RNA methyltransferase RlmE family.

It is found in the cytoplasm. It catalyses the reaction uridine(2552) in 23S rRNA + S-adenosyl-L-methionine = 2'-O-methyluridine(2552) in 23S rRNA + S-adenosyl-L-homocysteine + H(+). Specifically methylates the uridine in position 2552 of 23S rRNA at the 2'-O position of the ribose in the fully assembled 50S ribosomal subunit. This chain is Ribosomal RNA large subunit methyltransferase E, found in Treponema denticola (strain ATCC 35405 / DSM 14222 / CIP 103919 / JCM 8153 / KCTC 15104).